The following is an 853-amino-acid chain: MRGELPNKHHSYTFFVFLFFFLILFPDLSISVNTLSATESLTISSNKTIVSPGGVFELGFFRILGDSWYLGIWYKKISQRTYVWVANRDTPLSNPIGILKISNANLVILDNSDTHVWSTNLTGAVRSSVVAELLDNGNFVLRGSKINESDEFLWQSFDFPTDTLLPQMKLGRDHKRGLNRFVTSWKSSFDPSSGSFMFKLETLGLPEFFGFTSFLEVYRSGPWDGLRFSGILEMQQWDDIIYNFTENREEVAYTFRVTDHNSYSRLTINTVGRLEGFMWEPTQQEWNMFWFMPKDTCDLYGICGPYAYCDMSTSPTCNCIKGFQPLSPQDWASGDVTGRCRRKTQLTCGEDRFFRLMNMKIPATTAAIVDKRIGLKECEEKCKTHCNCTAYANSDIRNGGSGCIIWIGEFRDIRNYAADGQDLFVRLAAAEFGERRTIRGKIIGLIIGISLMLVLSFIIYCFWKKKQKRARATAAPIGYRDRIQELIITNGVVMSSGRRLLGEEEDLELPLTEFETVVMATENFSDSNILGRGGFGIVYKGRLLDGQEIAVKRLSEMSSQGTNEFKNEVRLIARLQHINLVRLLSCCIYADEKILIYEYLENGSLDSHLFETTQSSNKLNWQTRFSIINGIARGLLYLHQDSRFKIIHRDLKASNVLLDKNMTPKISDFGMARIFERDETEANTRKVVGTYGYMSPEYAMEGIFSVKSDVFSFGVLVLEIVSGKRNRGFHNSGQDNNLLGYTWENWKEGKGLEIVDSIIVDSSSSMSLFQPHEVLRCIQIGLLCVQERAEDRPKMSSVVLMLGSEKGEIPQPKRPGYCVGRSSLDTADSSSSTKRDSESLTVNQITVSVINAR.

Residues 1-31 (MRGELPNKHHSYTFFVFLFFFLILFPDLSIS) form the signal peptide. Over 32–441 (VNTLSATESL…FGERRTIRGK (410 aa)) the chain is Extracellular. Residues 34–154 (TLSATESLTI…KINESDEFLW (121 aa)) form the Bulb-type lectin domain. Asn-46, Asn-120, Asn-147, and Asn-243 each carry an N-linked (GlcNAc...) asparagine glycan. The EGF-like; atypical domain maps to 293-329 (PKDTCDLYGICGPYAYCDMSTSPTCNCIKGFQPLSPQ). Disulfide bonds link Cys-297–Cys-309, Cys-303–Cys-317, Cys-378–Cys-403, and Cys-382–Cys-388. Positions 348–428 (CGEDRFFRLM…DGQDLFVRLA (81 aa)) constitute a PAN domain. Asn-387 carries N-linked (GlcNAc...) asparagine glycosylation. The chain crosses the membrane as a helical span at residues 442–462 (IIGLIIGISLMLVLSFIIYCF). At 463 to 853 (WKKKQKRARA…QITVSVINAR (391 aa)) the chain is on the cytoplasmic side. One can recognise a Protein kinase domain in the interval 524 to 802 (FSDSNILGRG…PKMSSVVLML (279 aa)). Residues 530-538 (LGRGGFGIV) and Lys-552 each bind ATP. A Phosphoserine modification is found at Ser-558. A caM-binding region spans residues 613 to 631 (TQSSNKLNWQTRFSIINGI). Residue Asp-650 is the Proton acceptor of the active site. Phosphoserine occurs at positions 654 and 667. Phosphothreonine is present on Thr-684. Residues 807 to 838 (GEIPQPKRPGYCVGRSSLDTADSSSSTKRDSE) are disordered. Residues 822–832 (SSLDTADSSSS) are compositionally biased toward low complexity. Ser-831 carries the post-translational modification Phosphoserine.

This sequence belongs to the protein kinase superfamily. Ser/Thr protein kinase family.

The protein localises to the cell membrane. It carries out the reaction L-seryl-[protein] + ATP = O-phospho-L-seryl-[protein] + ADP + H(+). The catalysed reaction is L-threonyl-[protein] + ATP = O-phospho-L-threonyl-[protein] + ADP + H(+). Functionally, female specificity determinant of self-incompatibility. The chain is G-type lectin S-receptor-like serine/threonine-protein kinase SRK (SRK) from Arabidopsis thaliana (Mouse-ear cress).